The sequence spans 264 residues: Glutamate racemase (264 aa).

Substrate contacts are provided by residues 10 to 11 (DS) and 42 to 43 (YG). Catalysis depends on Cys-73, which acts as the Proton donor/acceptor. A substrate-binding site is contributed by 74-75 (NT). The Proton donor/acceptor role is filled by Cys-183. Substrate is bound at residue 184 to 185 (TH).

The protein belongs to the aspartate/glutamate racemases family.

The enzyme catalyses L-glutamate = D-glutamate. Its pathway is cell wall biogenesis; peptidoglycan biosynthesis. Its function is as follows. Provides the (R)-glutamate required for cell wall biosynthesis. The protein is Glutamate racemase of Streptococcus pneumoniae (strain ATCC BAA-255 / R6).